The sequence spans 603 residues: 65-kDa microtubule-associated protein 7 (603 aa).

Coiled coils occupy residues 48–79 (KECL…EAEI), 131–186 (DIKA…EKSD), and 468–502 (RLVS…LLIK). Positions 501–559 (IKRRESIYGSKPSPRRSNSVRKTNGYNGDASVPPTPRRNSAGATNNDIMTTPRSYSSHR) are disordered. The residue at position 513 (S513) is a Phosphoserine. Polar residues-rich tracts occupy residues 515–526 (RRSNSVRKTNGY) and 537–559 (RRNS…SSHR). Phosphoserine is present on S599.

Belongs to the MAP65/ASE1 family. As to quaternary structure, forms dimer. Binds to microtubules (MT).

Its subcellular location is the nucleus. The protein localises to the cytoplasm. It localises to the cytoskeleton. It is found in the spindle pole. The polypeptide is 65-kDa microtubule-associated protein 7 (MAP65-7) (Arabidopsis thaliana (Mouse-ear cress)).